A 121-amino-acid polypeptide reads, in one-letter code: Insertion element IS406 uncharacterized 13.3 kDa protein (121 aa).

This chain is Insertion element IS406 uncharacterized 13.3 kDa protein, found in Burkholderia multivorans (strain ATCC 17616 / 249).